A 148-amino-acid chain; its full sequence is uncharacterized protein (148 aa).

Low complexity predominate over residues 1-17 (MCPPVRQRPAQAPPAKR). 2 disordered regions span residues 1–86 (MCPP…VQSP) and 122–148 (RAHR…TSPC). Over residues 38 to 57 (RPPKMQRRPRPPVAKRRRFP) the composition is skewed to basic residues. The span at 137–148 (QRPSPDSQTSPC) shows a compositional bias: polar residues.

It belongs to the Epstein-Barr virus BLLF2 family.

This is an uncharacterized protein from Epstein-Barr virus (strain AG876) (HHV-4).